We begin with the raw amino-acid sequence, 320 residues long: Nuclease (320 aa).

Catalysis depends on H155, which acts as the Proton acceptor. N187 is a binding site for Mg(2+). N-linked (GlcNAc...) asparagine glycosylation occurs at N204. C312 and C317 form a disulfide bridge.

Belongs to the DNA/RNA non-specific endonuclease family. In terms of assembly, homodimer; as a result of non-covalent interactions and not through the disulfide linkages between the two monomers. Mg(2+) serves as cofactor. Requires Mn(2+) as cofactor. Post-translationally, glycosylated.

The protein localises to the secreted. This enzyme has both RNase and DNase activity. The polypeptide is Nuclease (Syncephalastrum racemosum (Filamentous fungus)).